A 187-amino-acid chain; its full sequence is Urease accessory protein UreE (187 aa).

Residues 154-187 form a disordered region; it reads RANSAQGHGHSHGHSHSHDHHGYHHHGDGNWHKH. The span at 162–177 shows a compositional bias: basic residues; that stretch reads GHSHGHSHSHDHHGYH. The span at 178–187 shows a compositional bias: basic and acidic residues; it reads HHGDGNWHKH.

The protein belongs to the UreE family.

Its subcellular location is the cytoplasm. In terms of biological role, involved in urease metallocenter assembly. Binds nickel. Probably functions as a nickel donor during metallocenter assembly. The sequence is that of Urease accessory protein UreE from Actinobacillus pleuropneumoniae (Haemophilus pleuropneumoniae).